A 391-amino-acid polypeptide reads, in one-letter code: Probable dual-specificity RNA methyltransferase RlmN (391 aa).

Positions 1-33 (MTTPLDTPTREPLPLAPAGPGKLVMSAPRRGKP) are disordered. Positions 12 to 21 (PLPLAPAGPG) are enriched in low complexity. Glu124 (proton acceptor) is an active-site residue. Positions 130–373 (YKNRDTICIS…TTVRDTRGSD (244 aa)) constitute a Radical SAM core domain. A disulfide bridge links Cys137 with Cys378. 3 residues coordinate [4Fe-4S] cluster: Cys144, Cys148, and Cys151. S-adenosyl-L-methionine contacts are provided by residues 199–200 (GE), Ser233, 256–258 (SLH), and Asn335. Catalysis depends on Cys378, which acts as the S-methylcysteine intermediate.

This sequence belongs to the radical SAM superfamily. RlmN family. [4Fe-4S] cluster serves as cofactor.

The protein resides in the cytoplasm. It carries out the reaction adenosine(2503) in 23S rRNA + 2 reduced [2Fe-2S]-[ferredoxin] + 2 S-adenosyl-L-methionine = 2-methyladenosine(2503) in 23S rRNA + 5'-deoxyadenosine + L-methionine + 2 oxidized [2Fe-2S]-[ferredoxin] + S-adenosyl-L-homocysteine. It catalyses the reaction adenosine(37) in tRNA + 2 reduced [2Fe-2S]-[ferredoxin] + 2 S-adenosyl-L-methionine = 2-methyladenosine(37) in tRNA + 5'-deoxyadenosine + L-methionine + 2 oxidized [2Fe-2S]-[ferredoxin] + S-adenosyl-L-homocysteine. Functionally, specifically methylates position 2 of adenine 2503 in 23S rRNA and position 2 of adenine 37 in tRNAs. In Kineococcus radiotolerans (strain ATCC BAA-149 / DSM 14245 / SRS30216), this protein is Probable dual-specificity RNA methyltransferase RlmN.